Here is a 408-residue protein sequence, read N- to C-terminus: Phosphopentomutase (408 aa).

The Mn(2+) site is built by aspartate 10, aspartate 307, histidine 312, aspartate 348, histidine 349, and histidine 360.

It belongs to the phosphopentomutase family. Mn(2+) is required as a cofactor.

It is found in the cytoplasm. The enzyme catalyses 2-deoxy-alpha-D-ribose 1-phosphate = 2-deoxy-D-ribose 5-phosphate. It catalyses the reaction alpha-D-ribose 1-phosphate = D-ribose 5-phosphate. It participates in carbohydrate degradation; 2-deoxy-D-ribose 1-phosphate degradation; D-glyceraldehyde 3-phosphate and acetaldehyde from 2-deoxy-alpha-D-ribose 1-phosphate: step 1/2. In terms of biological role, isomerase that catalyzes the conversion of deoxy-ribose 1-phosphate (dRib-1-P) and ribose 1-phosphate (Rib-1-P) to deoxy-ribose 5-phosphate (dRib-5-P) and ribose 5-phosphate (Rib-5-P), respectively. The chain is Phosphopentomutase from Proteus mirabilis (strain HI4320).